The chain runs to 788 residues: Protein translocase subunit SecA 2 (788 aa).

Residues Q77, 95–99, and D491 each bind ATP; that span reads GEGKT.

The protein belongs to the SecA family. As to quaternary structure, monomer and homodimer. Part of the essential Sec protein translocation apparatus which comprises SecA, SecYEG and auxiliary proteins SecDF. Other proteins may also be involved.

It localises to the cell membrane. The protein resides in the cytoplasm. The enzyme catalyses ATP + H2O + cellular proteinSide 1 = ADP + phosphate + cellular proteinSide 2.. In terms of biological role, part of the Sec protein translocase complex. Interacts with the SecYEG preprotein conducting channel. Has a central role in coupling the hydrolysis of ATP to the transfer of proteins into and across the cell membrane, serving as an ATP-driven molecular motor driving the stepwise translocation of polypeptide chains across the membrane. The sequence is that of Protein translocase subunit SecA 2 from Lactobacillus johnsonii (strain CNCM I-12250 / La1 / NCC 533).